The sequence spans 478 residues: tRNA (guanine(10)-N(2))-methyltransferase TRMT11 (478 aa).

Residues 457–478 form a disordered region; it reads EERARSEMANAENVKSKGKEDV.

Belongs to the class I-like SAM-binding methyltransferase superfamily. TRM11 methyltransferase family. As to quaternary structure, part of the heterodimeric TRMT11-TRM112 methyltransferase complex; this complex forms an active tRNA methyltransferase, where TRMT112 acts as an activator of the catalytic subunit TRMT11.

The protein localises to the cytoplasm. It catalyses the reaction guanosine(10) in tRNA + S-adenosyl-L-methionine = N(2)-methylguanosine(10) in tRNA + S-adenosyl-L-homocysteine + H(+). Its function is as follows. Catalytic subunit of the TRMT11-TRM112 methyltransferase complex, that specifically mediates the S-adenosyl-L-methionine-dependent N(2)-methylation of guanosine nucleotide at position 10 (m2G10) in tRNAs. This is one of the major tRNA (guanine-N(2))-methyltransferases. In Xenopus laevis (African clawed frog), this protein is tRNA (guanine(10)-N(2))-methyltransferase TRMT11 (trmt11.L).